We begin with the raw amino-acid sequence, 350 residues long: Flap endonuclease 1 (350 aa).

Residues 1–102 form an N-domain region; it reads MGVTELGKLI…IEIEKRRRVR (102 aa). Positions 31, 84, 156, 158, 177, 179, and 241 each coordinate Mg(2+). Positions 120-263 are I-domain; sequence EARKYAQRAL…RALRLIQEYG (144 aa).

The protein belongs to the XPG/RAD2 endonuclease family. FEN1 subfamily. In terms of assembly, interacts with PCNA. PCNA stimulates the nuclease activity without altering cleavage specificity. The cofactor is Mg(2+).

In terms of biological role, structure-specific nuclease with 5'-flap endonuclease and 5'-3' exonuclease activities involved in DNA replication and repair. During DNA replication, cleaves the 5'-overhanging flap structure that is generated by displacement synthesis when DNA polymerase encounters the 5'-end of a downstream Okazaki fragment. Binds the unpaired 3'-DNA end and kinks the DNA to facilitate 5' cleavage specificity. Cleaves one nucleotide into the double-stranded DNA from the junction in flap DNA, leaving a nick for ligation. Also involved in the base excision repair (BER) pathway. Acts as a genome stabilization factor that prevents flaps from equilibrating into structures that lead to duplications and deletions. Also possesses 5'-3' exonuclease activity on nicked or gapped double-stranded DNA. This is Flap endonuclease 1 from Caldivirga maquilingensis (strain ATCC 700844 / DSM 13496 / JCM 10307 / IC-167).